Here is a 132-residue protein sequence, read N- to C-terminus: Transcription antitermination protein NusB (132 aa).

Belongs to the NusB family.

In terms of biological role, involved in transcription antitermination. Required for transcription of ribosomal RNA (rRNA) genes. Binds specifically to the boxA antiterminator sequence of the ribosomal RNA (rrn) operons. This is Transcription antitermination protein NusB from Campylobacter lari (strain RM2100 / D67 / ATCC BAA-1060).